Here is a 255-residue protein sequence, read N- to C-terminus: UPF0246 protein DP0358 (255 aa).

It belongs to the UPF0246 family.

In Desulfotalea psychrophila (strain LSv54 / DSM 12343), this protein is UPF0246 protein DP0358.